We begin with the raw amino-acid sequence, 1507 residues long: DDB1- and CUL4-associated factor 1 (1507 aa).

The segment at glutamine 141 to aspartate 500 is protein kinase-like. Phosphoserine is present on residues serine 202 and serine 255. Positions histidine 242–serine 288 are disordered. The Chromo domain maps to serine 562–lysine 593. Lysine 701 is modified (N6-acetyllysine). Residue serine 828 is modified to Phosphoserine. In terms of domain architecture, LisH spans proline 846–methionine 878. At threonine 888 the chain carries Phosphothreonine. 2 positions are modified to phosphoserine: serine 895 and serine 898. The disordered stretch occupies residues alanine 917–tyrosine 947. Phosphoserine occurs at positions 979 and 1000. WD repeat units lie at residues glutamate 1091–serine 1130, cysteine 1133–histidine 1174, phenylalanine 1176–threonine 1213, phenylalanine 1215–arginine 1247, and serine 1248–threonine 1290. The interval glutamate 1091 to threonine 1290 is WD repeat-like region. 2 short sequence motifs (DWD box) span residues valine 1242–alanine 1249 and glutamate 1278–phenylalanine 1285. Serine 1328 is subject to Phosphoserine. Residues arginine 1393–glutamate 1507 are disordered. Composition is skewed to acidic residues over residues glutamate 1396–glutamate 1483 and aspartate 1490–isoleucine 1501. The tract at residues aspartate 1418–glutamate 1507 is interaction with NF2.

This sequence belongs to the VPRBP/DCAF1 family. Component of the DCX (DDB1-CUL4-X-box) E3 ubiquitin-protein ligase complex, named CUL4A-RBX1-DDB1-DCAF1/VPRBP complex. Interacts with DDB1; the interaction is direct. Also forms a ternary complex with DDA1 and DDB1. Interacts with NF2 (via FERM domain). Component of the EDVP complex, a E3 ligase complex containing DYRK2, EDD/UBR5, DDB1 and DCAF1. Interacts with DYRK2; the interaction is direct. Interacts with RAG1; the interaction is direct. Interacts with LLGL1 and LLGL2. Interacts with histone H3. Interacts with ESR1 and LATS1; probably recruited by LATS1 to promote ESR1 ubiquitination and ubiquitin-mediated proteasomal degradation. Directly interacts with TET1, TET2 and TET3 (via C-terminus). Interacts with CEP78; promoting DCAF1 localization to centrosomes. As to quaternary structure, (Microbial infection) Interacts with HIV-1 virus Vpr protein; the interaction is direct. In terms of assembly, (Microbial infection) Interacts with HIV-2 virus Vpx protein; the interaction is direct and the complex recruits SAMHD1 to promote its ubiquitin-dependent proteasomal degradation. (Microbial infection) Interacts (via C-terminus) with human cytomegalovirus protein UL35; this interaction induces the accumulation of cells in the G2 phase of the cell cycle. As to expression, ubiquitously expressed.

The protein localises to the cytoplasm. The protein resides in the nucleus. It localises to the cytoskeleton. Its subcellular location is the microtubule organizing center. It is found in the centrosome. It carries out the reaction L-seryl-[protein] + ATP = O-phospho-L-seryl-[protein] + ADP + H(+). The enzyme catalyses L-threonyl-[protein] + ATP = O-phospho-L-threonyl-[protein] + ADP + H(+). It participates in protein modification; protein ubiquitination. Acts both as a substrate recognition component of E3 ubiquitin-protein ligase complexes and as an atypical serine/threonine-protein kinase, playing key roles in various processes such as cell cycle, telomerase regulation and histone modification. Probable substrate-specific adapter of a DCX (DDB1-CUL4-X-box) E3 ubiquitin-protein ligase complex, named CUL4A-RBX1-DDB1-DCAF1/VPRBP complex, which mediates ubiquitination and proteasome-dependent degradation of proteins such as NF2. Involved in the turnover of methylated proteins: recognizes and binds methylated proteins via its chromo domain, leading to ubiquitination of target proteins by the RBX1-DDB1-DCAF1/VPRBP complex. The CUL4A-RBX1-DDB1-DCAF1/VPRBP complex is also involved in B-cell development: DCAF1 is recruited by RAG1 to ubiquitinate proteins, leading to limit error-prone repair during V(D)J recombination. Also part of the EDVP complex, an E3 ligase complex that mediates ubiquitination of proteins such as TERT, leading to TERT degradation and telomerase inhibition. The EDVP complex also mediates ubiquitination and degradation of CCP110. Also acts as an atypical serine/threonine-protein kinase that specifically mediates phosphorylation of 'Thr-120' of histone H2A (H2AT120ph) in a nucleosomal context, thereby repressing transcription. H2AT120ph is present in the regulatory region of many tumor suppresor genes, down-regulates their transcription and is present at high level in a number of tumors. Involved in JNK-mediated apoptosis during cell competition process via its interaction with LLGL1 and LLGL2. By acting on TET dioxygenses, essential for oocyte maintenance at the primordial follicle stage, hence essential for female fertility. Functionally, (Microbial infection) In case of infection by HIV-1 virus, it is recruited by HIV-1 Vpr in order to hijack the CUL4A-RBX1-DDB1-DCAF1/VPRBP function leading to arrest the cell cycle in G2 phase, and also to protect the viral protein from proteasomal degradation by another E3 ubiquitin ligase. The HIV-1 Vpr protein hijacks the CUL4A-RBX1-DDB1-DCAF1/VPRBP complex to promote ubiquitination and degradation of proteins such as TERT and ZIP/ZGPAT. Its function is as follows. (Microbial infection) In case of infection by HIV-2 virus, it is recruited by HIV-2 Vpx in order to hijack the CUL4A-RBX1-DDB1-DCAF1/VPRBP function leading to enhanced efficiency of macrophage infection and promotion of the replication of cognate primate lentiviruses in cells of monocyte/macrophage lineage. The chain is DDB1- and CUL4-associated factor 1 from Homo sapiens (Human).